We begin with the raw amino-acid sequence, 370 residues long: Anhydro-N-acetylmuramic acid kinase (370 aa).

12–19 (GTSLDGID) provides a ligand contact to ATP.

The protein belongs to the anhydro-N-acetylmuramic acid kinase family.

The enzyme catalyses 1,6-anhydro-N-acetyl-beta-muramate + ATP + H2O = N-acetyl-D-muramate 6-phosphate + ADP + H(+). The protein operates within amino-sugar metabolism; 1,6-anhydro-N-acetylmuramate degradation. Its pathway is cell wall biogenesis; peptidoglycan recycling. In terms of biological role, catalyzes the specific phosphorylation of 1,6-anhydro-N-acetylmuramic acid (anhMurNAc) with the simultaneous cleavage of the 1,6-anhydro ring, generating MurNAc-6-P. Is required for the utilization of anhMurNAc either imported from the medium or derived from its own cell wall murein, and thus plays a role in cell wall recycling. The protein is Anhydro-N-acetylmuramic acid kinase of Yersinia enterocolitica serotype O:8 / biotype 1B (strain NCTC 13174 / 8081).